Reading from the N-terminus, the 952-residue chain is Translation initiation factor IF-2 (952 aa).

Disordered stretches follow at residues 74–95 (QRRL…RQLK), 153–204 (AAQA…KEEP), 230–256 (MHSP…EQAD), and 273–319 (DEKG…DVND). The segment covering 153 to 168 (AAQADQTDQTDQTDQA) has biased composition (low complexity). Basic and acidic residues predominate over residues 232–242 (SPFDRSSEAER). Over residues 286–303 (PGETNAATPAGTASTAGA) the composition is skewed to low complexity. Positions 449–619 (IRPPVITIMG…LAEAEIRELK (171 aa)) constitute a tr-type G domain. Residues 458 to 465 (GHVDHGKT) are G1. 458-465 (GHVDHGKT) lines the GTP pocket. Positions 483 to 487 (GITQH) are G2. Positions 505–508 (DTPG) are G3. GTP is bound by residues 505–509 (DTPGH) and 559–562 (NKVD). The segment at 559–562 (NKVD) is G4. Residues 595 to 597 (SAK) are G5.

The protein belongs to the TRAFAC class translation factor GTPase superfamily. Classic translation factor GTPase family. IF-2 subfamily.

It localises to the cytoplasm. Functionally, one of the essential components for the initiation of protein synthesis. Protects formylmethionyl-tRNA from spontaneous hydrolysis and promotes its binding to the 30S ribosomal subunits. Also involved in the hydrolysis of GTP during the formation of the 70S ribosomal complex. The protein is Translation initiation factor IF-2 of Chlorobium limicola (strain DSM 245 / NBRC 103803 / 6330).